The primary structure comprises 421 residues: UDP-N-acetylglucosamine 1-carboxyvinyltransferase (421 aa).

Residue 22–23 (KN) coordinates phosphoenolpyruvate. R94 provides a ligand contact to UDP-N-acetyl-alpha-D-glucosamine. Residue C118 is the Proton donor of the active site. C118 is modified (2-(S-cysteinyl)pyruvic acid O-phosphothioketal). UDP-N-acetyl-alpha-D-glucosamine-binding positions include 123–127 (RPMDL), D308, and I330.

Belongs to the EPSP synthase family. MurA subfamily.

It localises to the cytoplasm. It carries out the reaction phosphoenolpyruvate + UDP-N-acetyl-alpha-D-glucosamine = UDP-N-acetyl-3-O-(1-carboxyvinyl)-alpha-D-glucosamine + phosphate. It participates in cell wall biogenesis; peptidoglycan biosynthesis. Functionally, cell wall formation. Adds enolpyruvyl to UDP-N-acetylglucosamine. This Ruegeria pomeroyi (strain ATCC 700808 / DSM 15171 / DSS-3) (Silicibacter pomeroyi) protein is UDP-N-acetylglucosamine 1-carboxyvinyltransferase.